Consider the following 316-residue polypeptide: Pantothenate kinase (316 aa).

Position 95–102 (95–102) interacts with ATP; sequence GSVAVGKS.

Belongs to the prokaryotic pantothenate kinase family.

It localises to the cytoplasm. The enzyme catalyses (R)-pantothenate + ATP = (R)-4'-phosphopantothenate + ADP + H(+). Its pathway is cofactor biosynthesis; coenzyme A biosynthesis; CoA from (R)-pantothenate: step 1/5. The chain is Pantothenate kinase from Shewanella woodyi (strain ATCC 51908 / MS32).